Here is a 301-residue protein sequence, read N- to C-terminus: Phosphatidylserine decarboxylase proenzyme (301 aa).

Residues Asp117, His173, and Ser260 each act as charge relay system; for autoendoproteolytic cleavage activity in the active site. Ser260 functions as the Schiff-base intermediate with substrate; via pyruvic acid; for decarboxylase activity in the catalytic mechanism. Ser260 is modified (pyruvic acid (Ser); by autocatalysis).

It belongs to the phosphatidylserine decarboxylase family. PSD-B subfamily. Prokaryotic type II sub-subfamily. Heterodimer of a large membrane-associated beta subunit and a small pyruvoyl-containing alpha subunit. Pyruvate serves as cofactor. In terms of processing, is synthesized initially as an inactive proenzyme. Formation of the active enzyme involves a self-maturation process in which the active site pyruvoyl group is generated from an internal serine residue via an autocatalytic post-translational modification. Two non-identical subunits are generated from the proenzyme in this reaction, and the pyruvate is formed at the N-terminus of the alpha chain, which is derived from the carboxyl end of the proenzyme. The autoendoproteolytic cleavage occurs by a canonical serine protease mechanism, in which the side chain hydroxyl group of the serine supplies its oxygen atom to form the C-terminus of the beta chain, while the remainder of the serine residue undergoes an oxidative deamination to produce ammonia and the pyruvoyl prosthetic group on the alpha chain. During this reaction, the Ser that is part of the protease active site of the proenzyme becomes the pyruvoyl prosthetic group, which constitutes an essential element of the active site of the mature decarboxylase.

It is found in the cell membrane. It carries out the reaction a 1,2-diacyl-sn-glycero-3-phospho-L-serine + H(+) = a 1,2-diacyl-sn-glycero-3-phosphoethanolamine + CO2. Its pathway is phospholipid metabolism; phosphatidylethanolamine biosynthesis; phosphatidylethanolamine from CDP-diacylglycerol: step 2/2. Its function is as follows. Catalyzes the formation of phosphatidylethanolamine (PtdEtn) from phosphatidylserine (PtdSer). This is Phosphatidylserine decarboxylase proenzyme from Chlamydia muridarum (strain MoPn / Nigg).